The chain runs to 525 residues: GMP synthase [glutamine-hydrolyzing] (525 aa).

In terms of domain architecture, Glutamine amidotransferase type-1 spans 8–207 (KILILDFGSQ…ALDICGCKAN (200 aa)). Residue Cys85 is the Nucleophile of the active site. Catalysis depends on residues His181 and Glu183. The GMPS ATP-PPase domain maps to 208–400 (WKPSSIIEDA…LGLPYNMLYR (193 aa)). 235 to 241 (SGGVDSS) provides a ligand contact to ATP.

In terms of assembly, homodimer.

The catalysed reaction is XMP + L-glutamine + ATP + H2O = GMP + L-glutamate + AMP + diphosphate + 2 H(+). It participates in purine metabolism; GMP biosynthesis; GMP from XMP (L-Gln route): step 1/1. Functionally, catalyzes the synthesis of GMP from XMP. This Shewanella frigidimarina (strain NCIMB 400) protein is GMP synthase [glutamine-hydrolyzing].